Consider the following 235-residue polypeptide: Large ribosomal subunit protein uL1 (235 aa).

This sequence belongs to the universal ribosomal protein uL1 family. In terms of assembly, part of the 50S ribosomal subunit.

In terms of biological role, binds directly to 23S rRNA. The L1 stalk is quite mobile in the ribosome, and is involved in E site tRNA release. Protein L1 is also a translational repressor protein, it controls the translation of the L11 operon by binding to its mRNA. This Pseudarthrobacter chlorophenolicus (strain ATCC 700700 / DSM 12829 / CIP 107037 / JCM 12360 / KCTC 9906 / NCIMB 13794 / A6) (Arthrobacter chlorophenolicus) protein is Large ribosomal subunit protein uL1.